Consider the following 574-residue polypeptide: Septation ring formation regulator EzrA (574 aa).

The Extracellular segment spans residues 1 to 7 (MSSGIIL). The helical transmembrane segment at 8–26 (LIVAIVLLVIIAYLVGVII) threads the bilayer. The Cytoplasmic segment spans residues 27-574 (RKRNDSLITS…YEKTREHIRF (548 aa)). Coiled-coil stretches lie at residues 102 to 141 (NFIR…EEKN), 274 to 350 (ELVT…ETES), and 459 to 520 (QLEA…SFEA).

The protein belongs to the EzrA family.

It localises to the cell membrane. Its function is as follows. Negative regulator of FtsZ ring formation; modulates the frequency and position of FtsZ ring formation. Inhibits FtsZ ring formation at polar sites. Interacts either with FtsZ or with one of its binding partners to promote depolymerization. This chain is Septation ring formation regulator EzrA, found in Streptococcus pyogenes serotype M4 (strain MGAS10750).